The primary structure comprises 353 residues: Ferredoxin--NADP reductase (353 aa).

Positions 25, 44, 52, 57, 97, 132, 298, and 339 each coordinate FAD.

Belongs to the ferredoxin--NADP reductase type 2 family. As to quaternary structure, homodimer. FAD is required as a cofactor.

The catalysed reaction is 2 reduced [2Fe-2S]-[ferredoxin] + NADP(+) + H(+) = 2 oxidized [2Fe-2S]-[ferredoxin] + NADPH. The sequence is that of Ferredoxin--NADP reductase from Chlorobium phaeovibrioides (strain DSM 265 / 1930) (Prosthecochloris vibrioformis (strain DSM 265)).